Here is a 210-residue protein sequence, read N- to C-terminus: NAD(P)H-hydrate epimerase (210 aa).

The YjeF N-terminal domain maps to 11-210; the sequence is AHNFDDYTIN…TVADIGIYEP (200 aa). 60-64 is a binding site for (6S)-NADPHX; it reads NNGGD. K(+) is bound by residues asparagine 61 and aspartate 123. Residues 127–133 and aspartate 156 contribute to the (6S)-NADPHX site; that span reads GVGLSRD. Residue threonine 159 participates in K(+) binding.

Belongs to the NnrE/AIBP family. The cofactor is K(+).

The enzyme catalyses (6R)-NADHX = (6S)-NADHX. It carries out the reaction (6R)-NADPHX = (6S)-NADPHX. Catalyzes the epimerization of the S- and R-forms of NAD(P)HX, a damaged form of NAD(P)H that is a result of enzymatic or heat-dependent hydration. This is a prerequisite for the S-specific NAD(P)H-hydrate dehydratase to allow the repair of both epimers of NAD(P)HX. This chain is NAD(P)H-hydrate epimerase, found in Oenococcus oeni (strain ATCC BAA-331 / PSU-1).